Here is a 246-residue protein sequence, read N- to C-terminus: tRNA pseudouridine synthase A (246 aa).

The active-site Nucleophile is the aspartate 52. Residue tyrosine 112 participates in substrate binding.

This sequence belongs to the tRNA pseudouridine synthase TruA family. Homodimer.

The catalysed reaction is uridine(38/39/40) in tRNA = pseudouridine(38/39/40) in tRNA. Formation of pseudouridine at positions 38, 39 and 40 in the anticodon stem and loop of transfer RNAs. The chain is tRNA pseudouridine synthase A from Pelagibacter ubique (strain HTCC1062).